Consider the following 63-residue polypeptide: Small ribosomal subunit protein eS17 (63 aa).

This sequence belongs to the eukaryotic ribosomal protein eS17 family.

The protein is Small ribosomal subunit protein eS17 of Methanosphaerula palustris (strain ATCC BAA-1556 / DSM 19958 / E1-9c).